A 309-amino-acid chain; its full sequence is Syndecan-1 (309 aa).

The N-terminal stretch at 1–22 (MRRAALWLWLCALALRLQPVLP) is a signal peptide. Topologically, residues 24-253 (IMAVNVPPED…GLLDRKEVLG (230 aa)) are extracellular. Disordered regions lie at residues 28-57 (NVPP…DITL) and 142-185 (ARAT…GGTS). Acidic residues predominate over residues 32 to 42 (EDQDGSGDDSD). O-linked (Xyl...) (chondroitin sulfate) serine glycosylation occurs at Ser37. Asn43 carries an N-linked (GlcNAc...) asparagine glycan. 2 O-linked (Xyl...) (heparan sulfate) serine glycosylation sites follow: Ser45 and Ser47. Positions 142 to 151 (ARATTAQAPV) are enriched in polar residues. O-linked (Xyl...) (chondroitin sulfate) serine glycosylation is found at Ser205 and Ser215. The chain crosses the membrane as a helical span at residues 254–274 (GVIAGGLVGLIFAVCLVGFML). Topologically, residues 275-309 (YRMKKKDEGSYSLEEPKQANGGAYQKPTKQEEFYA) are cytoplasmic. A disordered region spans residues 283 to 309 (GSYSLEEPKQANGGAYQKPTKQEEFYA). Ser284 carries the phosphoserine modification.

The protein belongs to the syndecan proteoglycan family. As to quaternary structure, interacts with CDCP1. Interacts (via C-terminus) with TIAM1 (via PDZ domain). Interacts with MDK. In terms of processing, shedding is enhanced by a number of factors such as heparanase, thrombin or EGF. Also by stress and wound healing. PMA-mediated shedding is inhibited by TIMP3.

The protein localises to the membrane. It localises to the secreted. It is found in the extracellular exosome. Functionally, cell surface proteoglycan that contains both heparan sulfate and chondroitin sulfate and that links the cytoskeleton to the interstitial matrix. Regulates exosome biogenesis in concert with SDCBP and PDCD6IP. Able to induce its own expression in dental mesenchymal cells and also in the neighboring dental epithelial cells via an MSX1-mediated pathway. In Cricetulus griseus (Chinese hamster), this protein is Syndecan-1.